Reading from the N-terminus, the 500-residue chain is MSRPLTGALAHGFLGKSPIWYKVVICLFLVLNPLLLVTIGPVATGWALVLEFIFTLAMALKCYPLMPGGLLLIEALLLQMTTPQALYEELQHNFPVILLLMFMVAGIHFMKELLLFLFSRILLGVRSKAILALLFCVLSAFLSAFLDALTVTAVIISAAVGFYAVYHRVASGANPREDSALESDQQVAHLHREDLDQFRAFLRSLLMHGAVGTALGGVCTLVGEPQNLLIGHEMGWHFVDFFLKVAPVSLPVLGAGLVTCVLLEKVRLFGYGTLMPEPVRRVLTAYAAEDDAARTQAQRIALWVQGLAALILIICLGLHVAEVGLIGLMVIVLITAFTGITDEHRLGRAFQDAMPFTSLLVVFFAVVAVIHQQQLFSPLINWVLALPAEQQPGMLYLANGLLSAISDNVFVATIYITEVKQAFLDGSMSREHFETLAVAINTGTNLPSVATPNGQAAFLFLLTSAIAPLIRLSYGRMVWMALPYTVVMGGLGWWAVTYWL.

The next 11 helical transmembrane spans lie at 23-43 (VVIC…GPVA), 53-73 (IFTL…LLLI), 96-116 (VILL…LLLF), 129-149 (AILA…LDAL), 150-170 (TVTA…HRVA), 205-225 (LLMH…VGEP), 238-258 (FVDF…AGLV), 311-331 (ILII…LMVI), 350-370 (FQDA…VAVI), 450-470 (ATPN…APLI), and 477-497 (MVWM…WAVT).

This sequence belongs to the NhaB Na(+)/H(+) (TC 2.A.34) antiporter family.

It is found in the cell inner membrane. The enzyme catalyses 2 Na(+)(in) + 3 H(+)(out) = 2 Na(+)(out) + 3 H(+)(in). Functionally, na(+)/H(+) antiporter that extrudes sodium in exchange for external protons. The sequence is that of Na(+)/H(+) antiporter NhaB from Pseudomonas putida (strain ATCC 47054 / DSM 6125 / CFBP 8728 / NCIMB 11950 / KT2440).